The following is a 337-amino-acid chain: UbiA prenyltransferase domain-containing protein 1 (337 aa).

Ala-2 carries the post-translational modification N-acetylalanine. Transmembrane regions (helical) follow at residues 82 to 102 (LLVG…LVNT), 133 to 153 (FGVF…CLSP), 159 to 179 (LALI…GIGF), 187 to 207 (LVIL…VQVG), 208 to 228 (SLAV…EAVL), 244 to 266 (IVTL…LLFL), 276 to 296 (THCS…FSLE), and 314 to 334 (LNLL…AGSL).

This sequence belongs to the UbiA prenyltransferase family. As to quaternary structure, interacts with HMGCR and SOAT1.

The protein localises to the endoplasmic reticulum membrane. Its subcellular location is the golgi apparatus membrane. It is found in the mitochondrion membrane. The enzyme catalyses menadiol + (2E,6E,10E)-geranylgeranyl diphosphate = menaquinol-4 + diphosphate. It catalyses the reaction all-trans-decaprenyl diphosphate + 4-hydroxybenzoate = 4-hydroxy-3-(all-trans-decaprenyl)benzoate + diphosphate. It functions in the pathway quinol/quinone metabolism; menaquinone biosynthesis. Its pathway is cofactor biosynthesis; ubiquinone biosynthesis. Its function is as follows. Prenyltransferase that mediates the formation of menaquinone-4 (MK-4) and coenzyme Q10. MK-4 is a vitamin K2 isoform required for endothelial cell development. Mediates the conversion of phylloquinone (PK) into MK-4, probably by cleaving the side chain of phylloquinone (PK) to release 2-methyl-1,4-naphthoquinone (menadione; K3) and then prenylating it with geranylgeranyl pyrophosphate (GGPP) to form MK-4. Also plays a role in cardiovascular development independently of MK-4 biosynthesis, by acting as a coenzyme Q10 biosynthetic enzyme: coenzyme Q10, also named ubiquinone, plays an important antioxidant role in the cardiovascular system. Mediates biosynthesis of coenzyme Q10 in the Golgi membrane, leading to protect cardiovascular tissues from NOS3/eNOS-dependent oxidative stress. This chain is UbiA prenyltransferase domain-containing protein 1 (UBIAD1), found in Ailuropoda melanoleuca (Giant panda).